Reading from the N-terminus, the 496-residue chain is Probable uroporphyrinogen-III C-methyltransferase (496 aa).

Belongs to the precorrin methyltransferase family.

It catalyses the reaction uroporphyrinogen III + 2 S-adenosyl-L-methionine = precorrin-2 + 2 S-adenosyl-L-homocysteine + H(+). Siroheme synthase involved in methionine biosynthesis. The protein is Probable uroporphyrinogen-III C-methyltransferase of Schizosaccharomyces pombe (strain 972 / ATCC 24843) (Fission yeast).